Reading from the N-terminus, the 641-residue chain is Phosphomethylpyrimidine synthase (641 aa).

The span at 1–12 (MTDTSTQNTATP) shows a compositional bias: polar residues. Positions 1-25 (MTDTSTQNTATPTDEYGAEIHPKHS) are disordered. Residues Asn200, Met229, Tyr258, His294, 314 to 316 (SRG), 355 to 358 (DGLR), and Glu394 contribute to the substrate site. Residue His398 coordinates Zn(2+). Position 421 (Tyr421) interacts with substrate. His462 is a Zn(2+) binding site. Positions 542, 545, and 550 each coordinate [4Fe-4S] cluster.

Belongs to the ThiC family. It depends on [4Fe-4S] cluster as a cofactor.

It carries out the reaction 5-amino-1-(5-phospho-beta-D-ribosyl)imidazole + S-adenosyl-L-methionine = 4-amino-2-methyl-5-(phosphooxymethyl)pyrimidine + CO + 5'-deoxyadenosine + formate + L-methionine + 3 H(+). It participates in cofactor biosynthesis; thiamine diphosphate biosynthesis. In terms of biological role, catalyzes the synthesis of the hydroxymethylpyrimidine phosphate (HMP-P) moiety of thiamine from aminoimidazole ribotide (AIR) in a radical S-adenosyl-L-methionine (SAM)-dependent reaction. The protein is Phosphomethylpyrimidine synthase of Corynebacterium jeikeium (strain K411).